The following is a 369-amino-acid chain: Phospho-N-acetylmuramoyl-pentapeptide-transferase (369 aa).

A run of 10 helical transmembrane segments spans residues 13–33 (ISGIGLASSLAAGLGIAALTL), 49–69 (LPLLLCTIASAIAGYFVVPLL), 95–115 (MGGIFFIPVAVVGACVLSNFA), 119–139 (LAVSALTLSYGLIGWIDDWQI), 154–174 (LALQIGFAAAFCLWLMFNQPA), 183–203 (WVSFALPLGFLFWPLAGFVLV), 215–235 (IDGLAGGTVAIALLALGAIVA), 237–257 (TSPALMVFCAALSGSCLGFLA), 281–301 (AVALLTNSLVALFILSGIFFV), and 346–366 (VVSSFYVIAAILAAICLAIAS).

The protein belongs to the glycosyltransferase 4 family. MraY subfamily. Mg(2+) is required as a cofactor.

It localises to the cell inner membrane. It catalyses the reaction UDP-N-acetyl-alpha-D-muramoyl-L-alanyl-gamma-D-glutamyl-meso-2,6-diaminopimeloyl-D-alanyl-D-alanine + di-trans,octa-cis-undecaprenyl phosphate = di-trans,octa-cis-undecaprenyl diphospho-N-acetyl-alpha-D-muramoyl-L-alanyl-D-glutamyl-meso-2,6-diaminopimeloyl-D-alanyl-D-alanine + UMP. Its pathway is cell wall biogenesis; peptidoglycan biosynthesis. Its function is as follows. Catalyzes the initial step of the lipid cycle reactions in the biosynthesis of the cell wall peptidoglycan: transfers peptidoglycan precursor phospho-MurNAc-pentapeptide from UDP-MurNAc-pentapeptide onto the lipid carrier undecaprenyl phosphate, yielding undecaprenyl-pyrophosphoryl-MurNAc-pentapeptide, known as lipid I. In Nostoc sp. (strain PCC 7120 / SAG 25.82 / UTEX 2576), this protein is Phospho-N-acetylmuramoyl-pentapeptide-transferase.